The chain runs to 488 residues: Cytochrome P450 71A24 (488 aa).

Residues 3 to 23 (MMMMIILLLCSIILITILFFK) traverse the membrane as a helical segment. Cys433 provides a ligand contact to heme.

This sequence belongs to the cytochrome P450 family. Requires heme as cofactor.

The protein localises to the membrane. In Arabidopsis thaliana (Mouse-ear cress), this protein is Cytochrome P450 71A24 (CYP71A24).